Here is a 379-residue protein sequence, read N- to C-terminus: Cytochrome b (379 aa).

4 helical membrane passes run 33-53 (FGSLLGVCLMIQILTGLFLAM), 77-98 (WLIRYLHANGASMFFICLFIHV), 113-133 (WNIGIILFLTTMATAFVGYVL), and 178-198 (FFAFHFILPFIITAFVLVHLL). Histidine 83 and histidine 97 together coordinate heme b. Residues histidine 182 and histidine 196 each contribute to the heme b site. Histidine 201 provides a ligand contact to a ubiquinone. 4 helical membrane passes run 226–246 (IKDLLGILFLLMALMILALFF), 288–308 (LGGVLALLLSIIILAAFPLLN), 320–340 (VTQTIYWIFIANLLVLTWIGG), and 347–367 (FTMIGQIASVIYFATIIVLMP).

It belongs to the cytochrome b family. In terms of assembly, the cytochrome bc1 complex contains 11 subunits: 3 respiratory subunits (MT-CYB, CYC1 and UQCRFS1), 2 core proteins (UQCRC1 and UQCRC2) and 6 low-molecular weight proteins (UQCRH/QCR6, UQCRB/QCR7, UQCRQ/QCR8, UQCR10/QCR9, UQCR11/QCR10 and a cleavage product of UQCRFS1). This cytochrome bc1 complex then forms a dimer. It depends on heme b as a cofactor.

Its subcellular location is the mitochondrion inner membrane. Component of the ubiquinol-cytochrome c reductase complex (complex III or cytochrome b-c1 complex) that is part of the mitochondrial respiratory chain. The b-c1 complex mediates electron transfer from ubiquinol to cytochrome c. Contributes to the generation of a proton gradient across the mitochondrial membrane that is then used for ATP synthesis. This Akodon iniscatus (Intelligent grass mouse) protein is Cytochrome b (MT-CYB).